The chain runs to 257 residues: MKFRGKVARYISEILEEGKTLHFSLFDPDKIFDLDSLHDIASKLIEAGTDVFLIGGTLGISQDKLDNILSILEEFSIPLIIFPSNVNLISNKADAILFLSLLNSDDLYYIVGAQIVAAPIIKRIGLEVLPTAYLIIGHGGTAGHIGRARVIPYDNIELIVSYSLAANYMGMKYIYLEAGSGASETVKPEAIKVVKNTVKDGVVIVGGGVTSEERARNLVLAGADIIVTGNVIERDHQKALKIIKEIKSIRRTSNAIK.

Mg(2+) contacts are provided by Asp27 and Thr57. Residues 175–181 (YLEAGSG), 207–208 (GG), and 229–230 (GN) each bind sn-glycerol 1-phosphate.

It belongs to the GGGP/HepGP synthase family. Group II subfamily. Mg(2+) serves as cofactor.

The protein localises to the cytoplasm. It catalyses the reaction sn-glycerol 1-phosphate + (2E,6E,10E)-geranylgeranyl diphosphate = sn-3-O-(geranylgeranyl)glycerol 1-phosphate + diphosphate. Its pathway is membrane lipid metabolism; glycerophospholipid metabolism. In terms of biological role, prenyltransferase that catalyzes the transfer of the geranylgeranyl moiety of geranylgeranyl diphosphate (GGPP) to the C3 hydroxyl of sn-glycerol-1-phosphate (G1P). This reaction is the first ether-bond-formation step in the biosynthesis of archaeal membrane lipids. The polypeptide is Geranylgeranylglyceryl phosphate synthase (Sulfolobus acidocaldarius (strain ATCC 33909 / DSM 639 / JCM 8929 / NBRC 15157 / NCIMB 11770)).